The sequence spans 138 residues: Putative pre-16S rRNA nuclease (138 aa).

It belongs to the YqgF nuclease family.

The protein resides in the cytoplasm. Functionally, could be a nuclease involved in processing of the 5'-end of pre-16S rRNA. The sequence is that of Putative pre-16S rRNA nuclease from Bacteroides thetaiotaomicron (strain ATCC 29148 / DSM 2079 / JCM 5827 / CCUG 10774 / NCTC 10582 / VPI-5482 / E50).